Reading from the N-terminus, the 408-residue chain is Protein SLX4IP (408 aa).

Residues Lys-61 and Lys-79 each participate in a glycyl lysine isopeptide (Lys-Gly) (interchain with G-Cter in SUMO2) cross-link. Ser-130 is subject to Phosphoserine. Residues Lys-167 and Lys-176 each participate in a glycyl lysine isopeptide (Lys-Gly) (interchain with G-Cter in SUMO2) cross-link. The interval 173–226 (TETKSSVTSKSQTRRDTVETSSDSVIAEIARRRNDGQASSSPPSESMGQAKDSI) is disordered. Residues 208–219 (GQASSSPPSESM) are compositionally biased toward polar residues. The residue at position 213 (Ser-213) is a Phosphoserine. Residues Lys-239 and Lys-242 each participate in a glycyl lysine isopeptide (Lys-Gly) (interchain with G-Cter in SUMO2) cross-link. A compositionally biased stretch (polar residues) spans 243–255 (VNQTQPEDTSGQQ). Residues 243–313 (VNQTQPEDTS…DFDHHGRVSL (71 aa)) form a disordered region. Residues Lys-256, Lys-291, Lys-347, Lys-356, and Lys-372 each participate in a glycyl lysine isopeptide (Lys-Gly) (interchain with G-Cter in SUMO2) cross-link. The disordered stretch occupies residues 365–408 (LSSRHLMKNNPGQAQQTGLATNTERLSTIQNSPTKKRKKYERGH). The segment covering 374-397 (NPGQAQQTGLATNTERLSTIQNSP) has biased composition (polar residues). Thr-392 carries the phosphothreonine modification. Residues 398 to 408 (TKKRKKYERGH) are compositionally biased toward basic residues. Lys-399 participates in a covalent cross-link: Glycyl lysine isopeptide (Lys-Gly) (interchain with G-Cter in SUMO2).

The protein belongs to the SLX4IP family. Interacts with SLX4/BTBD12; subunit of different structure-specific endonucleases.

This is Protein SLX4IP (SLX4IP) from Homo sapiens (Human).